The sequence spans 396 residues: MAKGKFERTKPHVNVGTIGHVDHGKTTLTAAITTILSKKFGGEAKAYDQIDAAPEEKARGITINTAHVEYETATRHYAHVDCPGHADYVKNMITGAAQMDGAILVCSAADGPMPQTREHILLARQVGVPYIIVFLNKCDMVDDEELLELVEMEVRELLSKYDFPGDDIPIVKGSALKALEGDQSDIGEPAIFRLADALDSYIPTPERAIDKPFLLPIEDVFSISGRGTVVTGRVERGIVKVGEEIEIVGIKPTVKTTCTGVEMFRKLLDQGQAGDNVGVLLRGTKREDVERGQVLCKPGSITPHTHFTGEIYVLSKEEGGRHTPFFNNYRPQFYFRTTDVTGSISLPEGTEMVMPGDNVSITVKLIAPIAMEEGLRFAIREGGRTVGAGVVAKIIE.

The 197-residue stretch at 10-206 folds into the tr-type G domain; sequence KPHVNVGTIG…ALDSYIPTPE (197 aa). The G1 stretch occupies residues 19-26; it reads GHVDHGKT. Position 19–26 (19–26) interacts with GTP; the sequence is GHVDHGKT. T26 contributes to the Mg(2+) binding site. The G2 stretch occupies residues 60–64; it reads GITIN. Positions 81-84 are G3; it reads DCPG. GTP contacts are provided by residues 81–85 and 136–139; these read DCPGH and NKCD. The interval 136 to 139 is G4; sequence NKCD. A G5 region spans residues 174 to 176; that stretch reads SAL.

This sequence belongs to the TRAFAC class translation factor GTPase superfamily. Classic translation factor GTPase family. EF-Tu/EF-1A subfamily. As to quaternary structure, monomer.

It is found in the cytoplasm. It carries out the reaction GTP + H2O = GDP + phosphate + H(+). Functionally, GTP hydrolase that promotes the GTP-dependent binding of aminoacyl-tRNA to the A-site of ribosomes during protein biosynthesis. The sequence is that of Elongation factor Tu from Azoarcus sp. (strain BH72).